A 166-amino-acid chain; its full sequence is Photosystem I assembly protein Ycf3 (166 aa).

TPR repeat units lie at residues 35-68 (AFTY…EIDA), 72-105 (SYML…NPRL), and 120-153 (GEQA…SPTS).

This sequence belongs to the Ycf3 family.

Its subcellular location is the plastid. It is found in the chloroplast thylakoid membrane. Essential for the assembly of the photosystem I (PSI) complex. May act as a chaperone-like factor to guide the assembly of the PSI subunits. The chain is Photosystem I assembly protein Ycf3 from Bigelowiella natans (Pedinomonas minutissima).